The following is an 83-amino-acid chain: Exodeoxyribonuclease 7 small subunit (83 aa).

This sequence belongs to the XseB family. Heterooligomer composed of large and small subunits.

Its subcellular location is the cytoplasm. It catalyses the reaction Exonucleolytic cleavage in either 5'- to 3'- or 3'- to 5'-direction to yield nucleoside 5'-phosphates.. Functionally, bidirectionally degrades single-stranded DNA into large acid-insoluble oligonucleotides, which are then degraded further into small acid-soluble oligonucleotides. The chain is Exodeoxyribonuclease 7 small subunit from Rhizobium etli (strain ATCC 51251 / DSM 11541 / JCM 21823 / NBRC 15573 / CFN 42).